A 925-amino-acid chain; its full sequence is Ubp5-interacting protein ftp105 (925 aa).

The span at 650–664 (EGSSDFESKSSDNTS) shows a compositional bias: low complexity. The disordered stretch occupies residues 650 to 671 (EGSSDFESKSSDNTSLDGTPLQ).

This sequence belongs to the hid-1 family. As to quaternary structure, interacts with ubp5.

It is found in the cytoplasm. Its subcellular location is the golgi apparatus. Functionally, required for the localization of ubp5 to the Golgi apparatus. Involved in detoxification of cadmium ion. The polypeptide is Ubp5-interacting protein ftp105 (ftp105) (Schizosaccharomyces pombe (strain 972 / ATCC 24843) (Fission yeast)).